The sequence spans 251 residues: MSKKQSTICQKVGIADLEIPIILGQKDGKLQHSIASCKITATIKETLKGDISGEVQRLLPSFTKEIEPKSWHRLLEEFKENIGVEKITLSLSCPFFVSKKAPVSELRGLMEYNCTFSASTGESGITTSLYVPVTTLCPCSKEISDGGAHNQRAEAIFRVEMKEHLWLEDLIQLVEESASCQVYSVLKRPDEKYVTEKAFDNPMFVEDVVRKIAVRAGEHPLIHAFSISVESFESIHKHNAYAYVNSEDLNL.

Belongs to the GTP cyclohydrolase IV family.

It catalyses the reaction GTP + H2O = 7,8-dihydroneopterin 3'-triphosphate + formate + H(+). Its pathway is cofactor biosynthesis; 7,8-dihydroneopterin triphosphate biosynthesis; 7,8-dihydroneopterin triphosphate from GTP: step 1/1. Functionally, converts GTP to 7,8-dihydroneopterin triphosphate. In Desulfotalea psychrophila (strain LSv54 / DSM 12343), this protein is GTP cyclohydrolase FolE2.